The primary structure comprises 208 residues: Probable GTP-binding protein EngB (208 aa).

The 174-residue stretch at 22–195 (GLPEIALAGR…WHSIEEIFIA (174 aa)) folds into the EngB-type G domain. GTP contacts are provided by residues 30-37 (GRSNVGKS), 57-61 (GKTRT), 75-78 (DLPG), 142-145 (TKSD), and 174-176 (ISS). Mg(2+) contacts are provided by Ser37 and Thr59.

Belongs to the TRAFAC class TrmE-Era-EngA-EngB-Septin-like GTPase superfamily. EngB GTPase family. The cofactor is Mg(2+).

Functionally, necessary for normal cell division and for the maintenance of normal septation. The sequence is that of Probable GTP-binding protein EngB from Alkaliphilus oremlandii (strain OhILAs) (Clostridium oremlandii (strain OhILAs)).